Reading from the N-terminus, the 200-residue chain is Pyridoxal 5'-phosphate synthase subunit PdxT (200 aa).

Residue 52–54 (GES) participates in L-glutamine binding. Cysteine 84 (nucleophile) is an active-site residue. L-glutamine contacts are provided by residues arginine 116 and 145 to 146 (IR). Catalysis depends on charge relay system residues histidine 181 and glutamate 183.

The protein belongs to the glutaminase PdxT/SNO family. As to quaternary structure, in the presence of PdxS, forms a dodecamer of heterodimers. Only shows activity in the heterodimer.

It carries out the reaction aldehydo-D-ribose 5-phosphate + D-glyceraldehyde 3-phosphate + L-glutamine = pyridoxal 5'-phosphate + L-glutamate + phosphate + 3 H2O + H(+). The enzyme catalyses L-glutamine + H2O = L-glutamate + NH4(+). It functions in the pathway cofactor biosynthesis; pyridoxal 5'-phosphate biosynthesis. Functionally, catalyzes the hydrolysis of glutamine to glutamate and ammonia as part of the biosynthesis of pyridoxal 5'-phosphate. The resulting ammonia molecule is channeled to the active site of PdxS. The polypeptide is Pyridoxal 5'-phosphate synthase subunit PdxT (Saccharolobus islandicus (strain Y.G.57.14 / Yellowstone #1) (Sulfolobus islandicus)).